The primary structure comprises 98 residues: MASTNFRPLHDRVVVRRVESEAKTKGGIIIPDTAKEKPQEGEIVAVGSGARDESGKVVALDVKAGDRILFGKWSGTEVKIDGEDLLIMKEADIMGIIG.

This sequence belongs to the GroES chaperonin family. Heptamer of 7 subunits arranged in a ring. Interacts with the chaperonin GroEL.

It localises to the cytoplasm. Its function is as follows. Together with the chaperonin GroEL, plays an essential role in assisting protein folding. The GroEL-GroES system forms a nano-cage that allows encapsulation of the non-native substrate proteins and provides a physical environment optimized to promote and accelerate protein folding. GroES binds to the apical surface of the GroEL ring, thereby capping the opening of the GroEL channel. In Rhizobium leguminosarum bv. trifolii (strain WSM2304), this protein is Co-chaperonin GroES.